Here is a 115-residue protein sequence, read N- to C-terminus: MRLNHKQGEAGEDAALAFLQSQGCTLLARNWHCAYGEIDLIVKNGGMILFVEVKYRKNRQFGGVAYSISPSKLLKLQRSVEYYLQQNRLTNVPCRLDAVLIEGNRPPEWIQNITG.

Belongs to the UPF0102 family.

The sequence is that of UPF0102 protein NMCC_2054 from Neisseria meningitidis serogroup C (strain 053442).